The chain runs to 459 residues: Cysteine--tRNA ligase (459 aa).

A Zn(2+)-binding site is contributed by Cys28. The short motif at 30-40 (VTVYDLCHFGH) is the 'HIGH' region element. Zn(2+)-binding residues include Cys209, His234, and Glu238. The 'KMSKS' region motif lies at 266–270 (KMSKS). Lys269 lines the ATP pocket.

The protein belongs to the class-I aminoacyl-tRNA synthetase family. Monomer. Zn(2+) is required as a cofactor.

It localises to the cytoplasm. It catalyses the reaction tRNA(Cys) + L-cysteine + ATP = L-cysteinyl-tRNA(Cys) + AMP + diphosphate. The sequence is that of Cysteine--tRNA ligase from Actinobacillus succinogenes (strain ATCC 55618 / DSM 22257 / CCUG 43843 / 130Z).